A 1292-amino-acid chain; its full sequence is Putative late blight resistance protein homolog R1C-3 (1292 aa).

Coiled-coil stretches lie at residues aspartate 394–glutamine 414 and arginine 505–asparagine 526. An NB-ARC domain is found at arginine 505–glycine 792. Glycine 538 to threonine 545 is a binding site for ATP. LRR repeat units lie at residues alanine 842–histidine 865, phenylalanine 920–leucine 944, leucine 963–methionine 991, proline 1066–alanine 1089, tyrosine 1094–histidine 1113, leucine 1114–glutamine 1142, and phenylalanine 1163–isoleucine 1187. Residues glutamate 1211–glutamate 1278 enclose the HMA domain.

The protein belongs to the disease resistance NB-LRR family.

It localises to the cytoplasm. The protein localises to the membrane. In terms of biological role, confers resistance to late blight (Phytophthora infestans) races carrying the avirulence gene Avr1. Resistance proteins guard the plant against pathogens that contain an appropriate avirulence protein via an indirect interaction with this avirulence protein. That triggers a defense system including the hypersensitive response, which restricts the pathogen growth. The protein is Putative late blight resistance protein homolog R1C-3 (R1C-3) of Solanum demissum (Wild potato).